The chain runs to 145 residues: UPF0735 ACT domain-containing protein CPR_1404 (145 aa).

One can recognise an ACT domain in the interval 69–144 (IFNMVVTHEK…GVEKVEFVAM (76 aa)).

The protein belongs to the UPF0735 family.

The chain is UPF0735 ACT domain-containing protein CPR_1404 from Clostridium perfringens (strain SM101 / Type A).